A 277-amino-acid chain; its full sequence is S-formylglutathione hydrolase FrmB (277 aa).

Residues Ser-145, Asp-221, and His-254 each act as charge relay system in the active site.

This sequence belongs to the esterase D family.

The enzyme catalyses S-formylglutathione + H2O = formate + glutathione + H(+). Serine hydrolase involved in the detoxification of formaldehyde. Hydrolyzes S-formylglutathione to glutathione and formate. This is S-formylglutathione hydrolase FrmB (frmB) from Escherichia coli O139:H28 (strain E24377A / ETEC).